The primary structure comprises 387 residues: Phosphoglycerate kinase (387 aa).

Residues 21–23, Arg36, 59–62, Arg113, and Arg146 each bind substrate; these read DLN and HLGR. Residues Lys197, Glu314, and 340-343 each bind ATP; that span reads GGDT.

This sequence belongs to the phosphoglycerate kinase family. Monomer.

It localises to the cytoplasm. The catalysed reaction is (2R)-3-phosphoglycerate + ATP = (2R)-3-phospho-glyceroyl phosphate + ADP. The protein operates within carbohydrate degradation; glycolysis; pyruvate from D-glyceraldehyde 3-phosphate: step 2/5. The sequence is that of Phosphoglycerate kinase from Tolumonas auensis (strain DSM 9187 / NBRC 110442 / TA 4).